The following is a 34-amino-acid chain: Antimicrobial peptide Alo-1 (34 aa).

Intrachain disulfides connect C1-C18, C8-C22, and C17-C33.

Its subcellular location is the secreted. Has antifungal activity against C.glabrata. This chain is Antimicrobial peptide Alo-1, found in Acrocinus longimanus (Giant harlequin beetle).